An 840-amino-acid polypeptide reads, in one-letter code: Urease (840 aa).

Residues glycine 402–phenylalanine 840 enclose the Urease domain. The Ni(2+) site is built by histidine 407, histidine 409, and lysine 490. N6-carboxylysine is present on lysine 490. Histidine 492 contributes to the substrate binding site. Positions 519 and 545 each coordinate Ni(2+). Histidine 593 acts as the Proton donor in catalysis. Aspartate 633 lines the Ni(2+) pocket.

In the C-terminal section; belongs to the metallo-dependent hydrolases superfamily. Urease alpha subunit family. As to quaternary structure, homohexamer. Other oligomeric forms may exist depending on pH and presence of salts. It depends on Ni cation as a cofactor. Post-translationally, carboxylation allows a single lysine to coordinate two nickel ions.

The catalysed reaction is urea + 2 H2O + H(+) = hydrogencarbonate + 2 NH4(+). It functions in the pathway nitrogen metabolism; urea degradation; CO(2) and NH(3) from urea (urease route): step 1/1. With respect to regulation, P-hydroxymercuribenzoate irreversibly abolishes ureolytic activity, but does not inhibit the ability to activate platelets. Also inhibited by acetohydroxamic acid (AHA), a chelator of Ni2+ and Zn2+ ions. Its function is as follows. Urea hydrolase involved in nitrogen recycling from ureide, purine, and arginine catabolism. Is known to be highly toxic and lethal when given by intravenous route, producing convulsions and other signs of central nervous system intoxication associated with the high levels of ammonia formed in the blood of mice and rabbits. Is neurotoxic in mammals, when directly injected into hippocampus. It may induce seizures by acting at a neuronal network level, thereby disturbing electroencephalographic rhythms and causing metabolic alterations in key areas related to epileptogenesis and to neurogenic pulmonary edema. It increases calcium influx and neuronal firing rate in the hippocampus. Is able to insert itself into lipid bilayers, altering physicochemical properties of artificial membranes, and forming cation-selective ion channels. In vitro, has the ability to induce platelet aggregation, platelet granules secretion and release of ATP. In contrast to canatoxin, another urease from C.ensiformis, is not lethal to mice when intraperitoneally injected. The sequence is that of Urease from Canavalia ensiformis (Jack bean).